We begin with the raw amino-acid sequence, 89 residues long: Small ribosomal subunit protein uS15 (89 aa).

The protein belongs to the universal ribosomal protein uS15 family. As to quaternary structure, part of the 30S ribosomal subunit. Forms a bridge to the 50S subunit in the 70S ribosome, contacting the 23S rRNA.

Functionally, one of the primary rRNA binding proteins, it binds directly to 16S rRNA where it helps nucleate assembly of the platform of the 30S subunit by binding and bridging several RNA helices of the 16S rRNA. Forms an intersubunit bridge (bridge B4) with the 23S rRNA of the 50S subunit in the ribosome. The protein is Small ribosomal subunit protein uS15 of Corynebacterium efficiens (strain DSM 44549 / YS-314 / AJ 12310 / JCM 11189 / NBRC 100395).